A 106-amino-acid polypeptide reads, in one-letter code: UPF0145 protein FTL_1249 (106 aa).

The protein belongs to the UPF0145 family.

This Francisella tularensis subsp. holarctica (strain LVS) protein is UPF0145 protein FTL_1249.